A 377-amino-acid chain; its full sequence is Molybdenum import ATP-binding protein ModC (377 aa).

The region spanning 17 to 254 is the ABC transporter domain; that stretch reads ITGDEAIRAR…LDLPFAHDED (238 aa). An ATP-binding site is contributed by 52 to 59; it reads GHSGSGKT. Residues 313–377 form the Mop domain; that stretch reads DSSILNVLPA…AQVKGVALLR (65 aa).

The protein belongs to the ABC transporter superfamily. Molybdate importer (TC 3.A.1.8) family. The complex is composed of two ATP-binding proteins (ModC), two transmembrane proteins (ModB) and a solute-binding protein (ModA).

The protein resides in the cell inner membrane. The catalysed reaction is molybdate(out) + ATP + H2O = molybdate(in) + ADP + phosphate + H(+). Part of the ABC transporter complex ModABC involved in molybdenum import. Responsible for energy coupling to the transport system. This chain is Molybdenum import ATP-binding protein ModC, found in Aromatoleum aromaticum (strain DSM 19018 / LMG 30748 / EbN1) (Azoarcus sp. (strain EbN1)).